We begin with the raw amino-acid sequence, 194 residues long: HTH-type transcriptional regulator BetI (194 aa).

Residues 8–68 (EIRRAQLIDA…ATMRHVLRDL (61 aa)) enclose the HTH tetR-type domain. The H-T-H motif DNA-binding region spans 31–50 (TLASVAQRANISTGIVSHYF).

Its pathway is amine and polyamine biosynthesis; betaine biosynthesis via choline pathway [regulation]. Functionally, repressor involved in the biosynthesis of the osmoprotectant glycine betaine. It represses transcription of the choline transporter BetT and the genes of BetAB involved in the synthesis of glycine betaine. The protein is HTH-type transcriptional regulator BetI of Burkholderia cenocepacia (strain ATCC BAA-245 / DSM 16553 / LMG 16656 / NCTC 13227 / J2315 / CF5610) (Burkholderia cepacia (strain J2315)).